A 437-amino-acid polypeptide reads, in one-letter code: Enolase (437 aa).

A (2R)-2-phosphoglycerate-binding site is contributed by Gln162. Catalysis depends on Glu204, which acts as the Proton donor. Mg(2+)-binding residues include Asp251, Glu297, and Asp324. Positions 349, 378, 379, and 400 each coordinate (2R)-2-phosphoglycerate. Catalysis depends on Lys349, which acts as the Proton acceptor.

It belongs to the enolase family. It depends on Mg(2+) as a cofactor.

The protein localises to the cytoplasm. It is found in the secreted. It localises to the cell surface. The enzyme catalyses (2R)-2-phosphoglycerate = phosphoenolpyruvate + H2O. It functions in the pathway carbohydrate degradation; glycolysis; pyruvate from D-glyceraldehyde 3-phosphate: step 4/5. Catalyzes the reversible conversion of 2-phosphoglycerate (2-PG) into phosphoenolpyruvate (PEP). It is essential for the degradation of carbohydrates via glycolysis. In Chlorobium luteolum (strain DSM 273 / BCRC 81028 / 2530) (Pelodictyon luteolum), this protein is Enolase.